The primary structure comprises 229 residues: Ribonuclease HII (229 aa).

Positions 34 to 223 (WPVAGADEAG…LRKTENGPET (190 aa)) constitute an RNase H type-2 domain. 3 residues coordinate a divalent metal cation: D40, E41, and D131. Residues 209-229 (MSFRPLRKTENGPETDELLSE) are disordered.

This sequence belongs to the RNase HII family. Requires Mn(2+) as cofactor. Mg(2+) serves as cofactor.

It is found in the cytoplasm. It catalyses the reaction Endonucleolytic cleavage to 5'-phosphomonoester.. Functionally, endonuclease that specifically degrades the RNA of RNA-DNA hybrids. In Rhizobium johnstonii (strain DSM 114642 / LMG 32736 / 3841) (Rhizobium leguminosarum bv. viciae), this protein is Ribonuclease HII.